A 241-amino-acid chain; its full sequence is Probable transcriptional regulatory protein Reut_A2522 (241 aa).

The protein belongs to the TACO1 family.

The protein resides in the cytoplasm. This chain is Probable transcriptional regulatory protein Reut_A2522, found in Cupriavidus pinatubonensis (strain JMP 134 / LMG 1197) (Cupriavidus necator (strain JMP 134)).